The chain runs to 501 residues: Phenylalanine--tRNA ligase alpha subunit (501 aa).

L-phenylalanine-binding residues include threonine 340 and phenylalanine 423. Glutamate 425 contacts Mg(2+). Phenylalanine 448 lines the L-phenylalanine pocket.

The protein belongs to the class-II aminoacyl-tRNA synthetase family. Phe-tRNA synthetase alpha subunit type 2 subfamily. In terms of assembly, tetramer of two alpha and two beta subunits. Requires Mg(2+) as cofactor.

The protein resides in the cytoplasm. The enzyme catalyses tRNA(Phe) + L-phenylalanine + ATP = L-phenylalanyl-tRNA(Phe) + AMP + diphosphate + H(+). In Methanococcus maripaludis (strain C5 / ATCC BAA-1333), this protein is Phenylalanine--tRNA ligase alpha subunit.